The chain runs to 218 residues: uncharacterized protein (218 aa).

2 stretches are compositionally biased toward polar residues: residues 1–21 and 68–102; these read MSSQQQESEASGYNTSASSEF and LNTSNDSNLVRNTARSPDSSMNGRPQTRRSTSSDI. 3 disordered regions span residues 1–39, 63–116, and 170–205; these read MSSQQQESEASGYNTSASSEFGSLEDSHQFVSPVTRHAS, EKRL…STSG, and GAKRKMATPSQSLKRQEKQSPLESRHGGLRSRGTPQ. Basic and acidic residues predominate over residues 183–195; the sequence is KRQEKQSPLESRH.

This is an uncharacterized protein from Caenorhabditis elegans.